The following is a 75-amino-acid chain: Protein SlyX homolog (75 aa).

Belongs to the SlyX family.

This Vibrio atlanticus (strain LGP32) (Vibrio splendidus (strain Mel32)) protein is Protein SlyX homolog.